Reading from the N-terminus, the 162-residue chain is AIMRMSGEGPTFDANTECAIAYHHTKYQVEQGTAQLYAGDDMAQDTTPILKPSFRLIADRIELKSKEVTHTQVPGEYATFCGWCVTPKGIIKEPRKLFASLQLAKHIGKTAEVKTNYAHDLAHAYRLGDELQDVLTPDEAAFHQATVRDLVTMGGVDFQWHP.

This sequence belongs to the potexvirus/carlavirus RNA replication protein family.

It catalyses the reaction RNA(n) + a ribonucleoside 5'-triphosphate = RNA(n+1) + diphosphate. The catalysed reaction is ATP + H2O = ADP + phosphate + H(+). Functionally, RNA replication. The central part of this protein possibly functions as an ATP-binding helicase. The protein is RNA replication protein of Lilium formosanum.